The sequence spans 359 residues: MRILGIETSCDETAAAIVERDGQGEGRILSNVVLSQIAEHEPYGGVVPEIAARAHVEALDRLVARALEDADMKLADVDAVAATAGPGLIGGLIVGLMTAKALAMAAQKPFYAVNHLEGHALTARLTDGLPFPYLLLLVSGGHTQMVLIRGIGDYERLGTTIDDALGEAFDKTAKLLGLPYPGGPAVERMALQGNPKRFALPRPLKGEARLDFSFSGLKTAVRQTATELVPLSDQDVADICASFQAAVADTLSDRVGRSLERFRNEFPDCETPALVVAGGVAANKTLRAALETLCARHGFSFIAPPLDLCTDNAAMIAWAGAERAATEAPDSLDLAPRSRWPLDEKSAPLIGTGRRGAKA.

Residues H115 and H119 each contribute to the Fe cation site. Substrate contacts are provided by residues 137–141, D170, G183, and N283; that span reads LVSGG. D311 contributes to the Fe cation binding site. A disordered region spans residues 328–359; it reads APDSLDLAPRSRWPLDEKSAPLIGTGRRGAKA.

This sequence belongs to the KAE1 / TsaD family. Fe(2+) is required as a cofactor.

It localises to the cytoplasm. It carries out the reaction L-threonylcarbamoyladenylate + adenosine(37) in tRNA = N(6)-L-threonylcarbamoyladenosine(37) in tRNA + AMP + H(+). Required for the formation of a threonylcarbamoyl group on adenosine at position 37 (t(6)A37) in tRNAs that read codons beginning with adenine. Is involved in the transfer of the threonylcarbamoyl moiety of threonylcarbamoyl-AMP (TC-AMP) to the N6 group of A37, together with TsaE and TsaB. TsaD likely plays a direct catalytic role in this reaction. The chain is tRNA N6-adenosine threonylcarbamoyltransferase from Brucella anthropi (strain ATCC 49188 / DSM 6882 / CCUG 24695 / JCM 21032 / LMG 3331 / NBRC 15819 / NCTC 12168 / Alc 37) (Ochrobactrum anthropi).